The sequence spans 371 residues: Glutamate 5-kinase (371 aa).

Lysine 14 serves as a coordination point for ATP. Serine 54, aspartate 141, and asparagine 153 together coordinate substrate. 173–174 provides a ligand contact to ATP; it reads TD. The PUA domain maps to 280-357; that stretch reads AGDLILDDGA…TQIEKLLGYI (78 aa).

It belongs to the glutamate 5-kinase family.

It localises to the cytoplasm. The enzyme catalyses L-glutamate + ATP = L-glutamyl 5-phosphate + ADP. It functions in the pathway amino-acid biosynthesis; L-proline biosynthesis; L-glutamate 5-semialdehyde from L-glutamate: step 1/2. In terms of biological role, catalyzes the transfer of a phosphate group to glutamate to form L-glutamate 5-phosphate. The polypeptide is Glutamate 5-kinase (Aromatoleum aromaticum (strain DSM 19018 / LMG 30748 / EbN1) (Azoarcus sp. (strain EbN1))).